The chain runs to 427 residues: Trigger factor (427 aa).

The 86-residue stretch at 163 to 248 (GDTVVIDFVG…IHEVKAKEVP (86 aa)) folds into the PPIase FKBP-type domain.

It belongs to the FKBP-type PPIase family. Tig subfamily.

The protein resides in the cytoplasm. The catalysed reaction is [protein]-peptidylproline (omega=180) = [protein]-peptidylproline (omega=0). Functionally, involved in protein export. Acts as a chaperone by maintaining the newly synthesized protein in an open conformation. Functions as a peptidyl-prolyl cis-trans isomerase. The protein is Trigger factor of Streptococcus pneumoniae (strain 70585).